The primary structure comprises 676 residues: Long-chain-fatty-acid--CoA ligase 1 (676 aa).

Position 246–257 (246–257 (YTSGSTGLPKGV)) interacts with ATP. Positions 511–560 (DGWFRTGDVGELTPEGLLRIIDRKKNLVKTQNGEYIALEKLESRYRTSSL) match the FACS motif.

It belongs to the ATP-dependent AMP-binding enzyme family. Mg(2+) serves as cofactor.

The catalysed reaction is a long-chain fatty acid + ATP + CoA = a long-chain fatty acyl-CoA + AMP + diphosphate. Functionally, esterification, concomitant with transport, of exogenous long-chain fatty acids into metabolically active CoA thioesters for subsequent degradation or incorporation into phospholipids. It may supplement intracellular myristoyl-CoA pools from exogenous myristate. Preferentially acts on C12:0-C16:0 fatty acids with myristic and pentadecanic acid (C15:0) having the highest activities. Appears to play a role in the maintenance of cell viability during stationary phase. The chain is Long-chain-fatty-acid--CoA ligase 1 (lcf1) from Schizosaccharomyces pombe (strain 972 / ATCC 24843) (Fission yeast).